A 164-amino-acid polypeptide reads, in one-letter code: Phosphopantetheine adenylyltransferase (164 aa).

Position 9 (Ser9) interacts with substrate. ATP is bound by residues 9–10 and His17; that span reads SF. Lys41, Leu73, and Lys87 together coordinate substrate. Residues 88-90, Glu98, and 123-129 each bind ATP; these read GLR and YSYISSS.

This sequence belongs to the bacterial CoaD family. Homohexamer. The cofactor is Mg(2+).

The protein resides in the cytoplasm. It catalyses the reaction (R)-4'-phosphopantetheine + ATP + H(+) = 3'-dephospho-CoA + diphosphate. The protein operates within cofactor biosynthesis; coenzyme A biosynthesis; CoA from (R)-pantothenate: step 4/5. Functionally, reversibly transfers an adenylyl group from ATP to 4'-phosphopantetheine, yielding dephospho-CoA (dPCoA) and pyrophosphate. The sequence is that of Phosphopantetheine adenylyltransferase from Clostridium perfringens (strain SM101 / Type A).